The sequence spans 574 residues: Membrane protein insertase YidC (574 aa).

6 consecutive transmembrane segments (helical) span residues 6–26 (VFLI…WGKD), 356–376 (FSIM…LHSF), 380–400 (WGWA…PLSA), 447–467 (GGCL…WVLV), 489–509 (PYFI…KLTP), and 525–545 (PLVF…YWVV).

It belongs to the OXA1/ALB3/YidC family. Type 1 subfamily. In terms of assembly, interacts with the Sec translocase complex via SecD. Specifically interacts with transmembrane segments of nascent integral membrane proteins during membrane integration.

It localises to the cell inner membrane. Its function is as follows. Required for the insertion and/or proper folding and/or complex formation of integral membrane proteins into the membrane. Involved in integration of membrane proteins that insert both dependently and independently of the Sec translocase complex, as well as at least some lipoproteins. Aids folding of multispanning membrane proteins. This Xanthomonas axonopodis pv. citri (strain 306) protein is Membrane protein insertase YidC.